The chain runs to 251 residues: Aliphatic sulfonates import ATP-binding protein SsuB (251 aa).

The 229-residue stretch at 3 to 231 (VSINEVSKYF…PRSKNSESFQ (229 aa)) folds into the ABC transporter domain. An ATP-binding site is contributed by 39–46 (GPSGCGKS).

It belongs to the ABC transporter superfamily. Aliphatic sulfonates importer (TC 3.A.1.17.2) family. The complex is composed of two ATP-binding proteins (SsuB), two transmembrane proteins (SsuC) and a solute-binding protein (SsuA).

The protein localises to the cell membrane. The enzyme catalyses ATP + H2O + aliphatic sulfonate-[sulfonate-binding protein]Side 1 = ADP + phosphate + aliphatic sulfonateSide 2 + [sulfonate-binding protein]Side 1.. Functionally, part of the ABC transporter complex SsuABC involved in aliphatic sulfonates import. Responsible for energy coupling to the transport system. The polypeptide is Aliphatic sulfonates import ATP-binding protein SsuB (Bacillus cereus (strain ZK / E33L)).